We begin with the raw amino-acid sequence, 205 residues long: dITP/XTP pyrophosphatase (205 aa).

16–21 is a binding site for substrate; that stretch reads TGNPGK. Mg(2+) is bound by residues E48 and D77. D77 functions as the Proton acceptor in the catalytic mechanism. Residues S78, 162–165, K185, and 190–191 contribute to the substrate site; these read FGYD and HR.

Belongs to the HAM1 NTPase family. Homodimer. Requires Mg(2+) as cofactor.

It catalyses the reaction XTP + H2O = XMP + diphosphate + H(+). The enzyme catalyses dITP + H2O = dIMP + diphosphate + H(+). It carries out the reaction ITP + H2O = IMP + diphosphate + H(+). In terms of biological role, pyrophosphatase that catalyzes the hydrolysis of nucleoside triphosphates to their monophosphate derivatives, with a high preference for the non-canonical purine nucleotides XTP (xanthosine triphosphate), dITP (deoxyinosine triphosphate) and ITP. Seems to function as a house-cleaning enzyme that removes non-canonical purine nucleotides from the nucleotide pool, thus preventing their incorporation into DNA/RNA and avoiding chromosomal lesions. The chain is dITP/XTP pyrophosphatase from Erwinia tasmaniensis (strain DSM 17950 / CFBP 7177 / CIP 109463 / NCPPB 4357 / Et1/99).